Reading from the N-terminus, the 267-residue chain is tRNA pseudouridine synthase A (267 aa).

The active-site Nucleophile is the Asp52. A substrate-binding site is contributed by Tyr110.

The protein belongs to the tRNA pseudouridine synthase TruA family. As to quaternary structure, homodimer.

The catalysed reaction is uridine(38/39/40) in tRNA = pseudouridine(38/39/40) in tRNA. Its function is as follows. Formation of pseudouridine at positions 38, 39 and 40 in the anticodon stem and loop of transfer RNAs. The polypeptide is tRNA pseudouridine synthase A (Paraburkholderia phymatum (strain DSM 17167 / CIP 108236 / LMG 21445 / STM815) (Burkholderia phymatum)).